A 486-amino-acid polypeptide reads, in one-letter code: Cardiolipin synthase A (486 aa).

The next 2 membrane-spanning stretches (helical) occupy residues 3 to 23 and 38 to 58; these read TFYT…IAGV and MAWL…YLSF. 2 PLD phosphodiesterase domains span residues 219 to 246 and 399 to 426; these read MDLR…VDPR and EGGL…DMRS. Catalysis depends on residues H224, K226, D231, H404, K406, and D411.

It belongs to the phospholipase D family. Cardiolipin synthase subfamily. ClsA sub-subfamily.

The protein localises to the cell inner membrane. It carries out the reaction 2 a 1,2-diacyl-sn-glycero-3-phospho-(1'-sn-glycerol) = a cardiolipin + glycerol. Catalyzes the reversible phosphatidyl group transfer from one phosphatidylglycerol molecule to another to form cardiolipin (CL) (diphosphatidylglycerol) and glycerol. This is Cardiolipin synthase A from Yersinia pseudotuberculosis serotype O:3 (strain YPIII).